Reading from the N-terminus, the 366-residue chain is Bacteriochlorophyll a protein (366 aa).

Bacteriochlorophyll a-binding residues include His111, His146, His290, His297, and His298.

In terms of assembly, homotrimer. Each subunit contains 7 molecules of bacteriochlorophyll a.

In terms of biological role, intermediary in the transfer of excitation energy from the chlorophyll to the reaction centers. The polypeptide is Bacteriochlorophyll a protein (fmoA) (Chlorobaculum tepidum (strain ATCC 49652 / DSM 12025 / NBRC 103806 / TLS) (Chlorobium tepidum)).